The primary structure comprises 396 residues: Stearoyl-[acyl-carrier-protein] 9-desaturase, chloroplastic (396 aa).

A chloroplast-targeting transit peptide spans 1 to 33 (MALKLNPFLSQTQKLPSFALPPMASTRSPKFYM). Fe cation contacts are provided by Glu138, Glu176, His179, Glu229, Glu262, and His265.

It belongs to the fatty acid desaturase type 2 family. As to quaternary structure, homodimer. Fe(2+) serves as cofactor. In terms of tissue distribution, higher levels in developing seeds than in leaf and root tissues.

It is found in the plastid. It localises to the chloroplast. It catalyses the reaction octadecanoyl-[ACP] + 2 reduced [2Fe-2S]-[ferredoxin] + O2 + 2 H(+) = (9Z)-octadecenoyl-[ACP] + 2 oxidized [2Fe-2S]-[ferredoxin] + 2 H2O. Its pathway is lipid metabolism; fatty acid metabolism. Converts stearoyl-ACP to oleoyl-ACP by introduction of a cis double bond between carbons 9 and 10 of the acyl chain. The sequence is that of Stearoyl-[acyl-carrier-protein] 9-desaturase, chloroplastic from Ricinus communis (Castor bean).